Consider the following 134-residue polypeptide: MVSAFNTGRTDDVDEYIHPDYLNPATLEHGIHTGPKAFAQLVGWVRATFSEEARLEEVRIEERGPWVKAYLVLYGRHVGRLVGMPPTDRRFSGEQVHLMRIVDGKIRDHRDWPDFQGTLRQLGDPWPDDEGWRP.

Residue glutamine 95 participates in nogalaviketone binding. The Proton donor/acceptor role is filled by aspartate 111.

Belongs to the polyketide cyclase DnrD family. As to quaternary structure, homotetramer. Dimer of dimers.

The catalysed reaction is nogalaviketone = methyl nogalonate. It functions in the pathway antibiotic biosynthesis. In terms of biological role, involved in the biosynthesis of the aromatic polyketide antibiotic nogalamycin. Catalyzes the formation of nogalaviketone from nogalonic acid methyl ester (NAME), the last ring-closure step in the biosynthesis of nogalamycin. The protein is Nogalonic acid methyl ester cyclase of Streptomyces nogalater.